We begin with the raw amino-acid sequence, 1465 residues long: Protein clueless (1465 aa).

Residues Met-1–Ala-87 are disordered. Residues His-30–Ala-51 are compositionally biased toward low complexity. Residues Thr-52 to Asn-61 are compositionally biased toward basic residues. Ser-273 is subject to Phosphoserine. The Clu domain occupies Arg-427–Leu-669. Residues Ala-742–Lys-767 show a composition bias toward basic and acidic residues. Disordered regions lie at residues Ala-742 to Ala-776 and Val-962 to Asp-1021. Residues Lys-970–Lys-986 are compositionally biased toward basic residues. Low complexity-rich tracts occupy residues Ala-987–Ala-1003 and Ala-1010–Ser-1020. 3 TPR repeats span residues Ala-1114–Val-1147, Ala-1240–Tyr-1273, and Gly-1275–Thr-1308. The tract at residues Asn-1428–Ser-1465 is disordered. Positions Gly-1447–Ser-1465 are enriched in polar residues.

It belongs to the CLU family.

It localises to the cytoplasm. MRNA-binding protein involved in proper cytoplasmic distribution of mitochondria. This is Protein clueless from Drosophila virilis (Fruit fly).